A 266-amino-acid chain; its full sequence is Protein-ADP-ribose hydrolase (266 aa).

Residues 74 to 265 form the Macro domain; sequence TDLKDLKPIK…LYKEAFNRDA (192 aa). ADP-D-ribose contacts are provided by aspartate 93, isoleucine 94, and asparagine 107. The Zn(2+) site is built by cysteine 113, histidine 118, and cysteine 120. The ADP-D-ribose site is built by cysteine 120, isoleucine 121, aspartate 122, serine 212, threonine 213, glycine 214, and phenylalanine 216.

Belongs to the MacroD-type family. Zn-Macro subfamily. The cofactor is Zn(2+).

The enzyme catalyses 4-O-(ADP-D-ribosyl)-L-aspartyl-[protein] + H2O = L-aspartyl-[protein] + ADP-D-ribose + H(+). ADP-ribosylhydrolase that specifically reverses the SirTM-mediated mono-ADP-ribosylation at an asparatate residue of GcvH-L, by releasing ADP-ribose from the target protein. May play a role in the regulation of the response to host-induced oxidative stress. In Staphylococcus aureus (strain MSSA476), this protein is Protein-ADP-ribose hydrolase.